Here is a 729-residue protein sequence, read N- to C-terminus: Neurochondrin (729 aa).

Position 2 is an N-acetylserine (Ser-2). Ser-2 carries the post-translational modification Phosphoserine. 2 S-palmitoyl cysteine lipidation sites follow: Cys-3 and Cys-4. At Arg-75 the chain carries Asymmetric dimethylarginine. The residue at position 448 (Ser-448) is a Phosphoserine.

This sequence belongs to the neurochondrin family. As to quaternary structure, interacts with MCHR1. Interacts with SEMA4C. Interacts with DIAPH1 (via FH3 domain). Interacts with GRM5. Post-translationally, palmitoylated. Palmitoylation by ZDHHC1, ZDHHC3 and ZDHHC11 regulates the association of NCDN with endosome membranes. May also be palmitoylated by ZDHHC7.

The protein resides in the cytoplasm. Its subcellular location is the cytosol. It localises to the endosome membrane. It is found in the cell projection. The protein localises to the dendrite. The protein resides in the postsynapse. Probably involved in signal transduction, in the nervous system, via increasing cell surface localization of GRM5 and positively regulating its signaling. Required for the spatial learning process. Acts as a negative regulator of Ca(2+)-calmodulin-dependent protein kinase 2 (CaMK2) phosphorylation. May play a role in modulating melanin-concentrating hormone-mediated functions via its interaction with MCHR1 that interferes with G protein-coupled signal transduction. May be involved in bone metabolism. May also be involved in neurite outgrowth. This Bos taurus (Bovine) protein is Neurochondrin (NCDN).